The primary structure comprises 198 residues: CXXC-type zinc finger protein 4 (198 aa).

The disordered stretch occupies residues 114 to 134 (NHSSSSSSSSGGAGGANPAKK). A CXXC-type zinc finger spans residues 132 to 173 (AKKKRKRCGVCVPCKRLINCGVCSSCRNRKTGHQICKFRKCE). C139, C142, C145, C151, C154, and C157 together coordinate Zn(2+). Residues 161 to 166 (KTGHQI) are interaction with DVL1. The Zn(2+) site is built by C167 and C172.

Interacts with the PDZ domain of DVL1.

It is found in the cytoplasm. Acts as a negative regulator of the Wnt signaling pathway via its interaction with DVL1. Binds preferentially to DNA containing cytidine-phosphate-guanosine (CpG) dinucleotides over CpH (H=A, T, and C), hemimethylated-CpG and hemimethylated-hydroxymethyl-CpG. The polypeptide is CXXC-type zinc finger protein 4 (CXXC4) (Homo sapiens (Human)).